The following is a 366-amino-acid chain: tRNA/tmRNA (uracil-C(5))-methyltransferase (366 aa).

Gln190, Tyr218, Asn223, Glu239, and Asp299 together coordinate S-adenosyl-L-methionine. The active-site Nucleophile is the Cys324. Residue Glu358 is the Proton acceptor of the active site.

It belongs to the class I-like SAM-binding methyltransferase superfamily. RNA M5U methyltransferase family. TrmA subfamily.

The enzyme catalyses uridine(54) in tRNA + S-adenosyl-L-methionine = 5-methyluridine(54) in tRNA + S-adenosyl-L-homocysteine + H(+). The catalysed reaction is uridine(341) in tmRNA + S-adenosyl-L-methionine = 5-methyluridine(341) in tmRNA + S-adenosyl-L-homocysteine + H(+). Functionally, dual-specificity methyltransferase that catalyzes the formation of 5-methyluridine at position 54 (m5U54) in all tRNAs, and that of position 341 (m5U341) in tmRNA (transfer-mRNA). In Salmonella paratyphi B (strain ATCC BAA-1250 / SPB7), this protein is tRNA/tmRNA (uracil-C(5))-methyltransferase.